We begin with the raw amino-acid sequence, 274 residues long: Ribose-5-phosphate isomerase (274 aa).

It belongs to the ribose 5-phosphate isomerase family.

The protein resides in the cytoplasm. The enzyme catalyses aldehydo-D-ribose 5-phosphate = D-ribulose 5-phosphate. It participates in carbohydrate degradation; pentose phosphate pathway; D-ribose 5-phosphate from D-ribulose 5-phosphate (non-oxidative stage): step 1/1. The chain is Ribose-5-phosphate isomerase (rki1) from Schizosaccharomyces pombe (strain 972 / ATCC 24843) (Fission yeast).